We begin with the raw amino-acid sequence, 459 residues long: ATP synthase subunit beta (459 aa).

148–155 is a binding site for ATP; the sequence is GGAGVGKT.

This sequence belongs to the ATPase alpha/beta chains family. As to quaternary structure, F-type ATPases have 2 components, CF(1) - the catalytic core - and CF(0) - the membrane proton channel. CF(1) has five subunits: alpha(3), beta(3), gamma(1), delta(1), epsilon(1). CF(0) has three main subunits: a(1), b(2) and c(9-12). The alpha and beta chains form an alternating ring which encloses part of the gamma chain. CF(1) is attached to CF(0) by a central stalk formed by the gamma and epsilon chains, while a peripheral stalk is formed by the delta and b chains.

It is found in the cell inner membrane. It carries out the reaction ATP + H2O + 4 H(+)(in) = ADP + phosphate + 5 H(+)(out). In terms of biological role, produces ATP from ADP in the presence of a proton gradient across the membrane. The catalytic sites are hosted primarily by the beta subunits. This Thiobacillus denitrificans (strain ATCC 25259 / T1) protein is ATP synthase subunit beta.